A 503-amino-acid polypeptide reads, in one-letter code: Anthranilate synthase component 1 3 (503 aa).

Pro269–Ser271 is a binding site for L-tryptophan. Residue Gly304–Thr305 participates in chorismate binding. Glu331 lines the Mg(2+) pocket. Chorismate is bound by residues Tyr419, Arg439, Gly453 to Gly455, and Gly455. Glu468 lines the Mg(2+) pocket.

The protein belongs to the anthranilate synthase component I family. Tetramer of two components I and two components II. Mg(2+) is required as a cofactor.

It carries out the reaction chorismate + L-glutamine = anthranilate + pyruvate + L-glutamate + H(+). Its pathway is amino-acid biosynthesis; L-tryptophan biosynthesis; L-tryptophan from chorismate: step 1/5. In Haloarcula marismortui (strain ATCC 43049 / DSM 3752 / JCM 8966 / VKM B-1809) (Halobacterium marismortui), this protein is Anthranilate synthase component 1 3 (trpE3).